We begin with the raw amino-acid sequence, 249 residues long: MYKIVLLRHGESTWNKENRFTGWTDVDLTELGVGEARAAGQLLKREGYSFDLAFTSVLKRANKTLNIVLEELDALWLPVEHSWRLNERHYGALQGLNKAETAAKFGDDQVLVWRRSYDIPPPALEEGDERLNYDDPRYGSLPRARFPRTECLADTVARVVPYWETVIVPQILSGRRILIAAHGNSLRALIKYLDGISDGDIVGLNIPTAQPLVYELDVNLKPVKSYYLADEDTIRAAQAAVAGQGKAKG.

Residues 8–15, 21–22, Arg-60, 87–90, Lys-98, 114–115, and 183–184 contribute to the substrate site; these read RHGESTWN, TG, ERHY, RR, and GN. Residue His-9 is the Tele-phosphohistidine intermediate of the active site. Glu-87 functions as the Proton donor/acceptor in the catalytic mechanism.

This sequence belongs to the phosphoglycerate mutase family. BPG-dependent PGAM subfamily. As to quaternary structure, homodimer.

The catalysed reaction is (2R)-2-phosphoglycerate = (2R)-3-phosphoglycerate. Its pathway is carbohydrate degradation; glycolysis; pyruvate from D-glyceraldehyde 3-phosphate: step 3/5. In terms of biological role, catalyzes the interconversion of 2-phosphoglycerate and 3-phosphoglycerate. The polypeptide is 2,3-bisphosphoglycerate-dependent phosphoglycerate mutase (Azoarcus sp. (strain BH72)).